Consider the following 469-residue polypeptide: Citrate synthase, mitochondrial (469 aa).

Residues 1–28 (MAFFRTVTKLRSRLGQPPSLRDSVRCLQ) constitute a mitochondrion transit peptide. Catalysis depends on residues His304, His350, and Asp405.

Belongs to the citrate synthase family. In terms of assembly, homodimer.

It localises to the mitochondrion matrix. The catalysed reaction is oxaloacetate + acetyl-CoA + H2O = citrate + CoA + H(+). It participates in carbohydrate metabolism; tricarboxylic acid cycle; isocitrate from oxaloacetate: step 1/2. The polypeptide is Citrate synthase, mitochondrial (MCSI) (Fragaria ananassa (Strawberry)).